The following is a 341-amino-acid chain: HTH-type transcriptional repressor PurR (341 aa).

An HTH lacI-type domain is found at 2–56; that stretch reads ATIKDVAKRANVSTTTVSHVINKTRFVAEETRNAVWAAIKELHYSPSAVARSLKV. A DNA-binding region (H-T-H motif) is located at residues 4-23; the sequence is IKDVAKRANVSTTTVSHVIN. A DNA-binding region spans residues 48–56; sequence SAVARSLKV. Positions 73, 190, 192, 221, and 275 each coordinate hypoxanthine.

Homodimer.

The protein operates within purine metabolism; purine nucleotide biosynthesis [regulation]. Functionally, is the main repressor of the genes involved in the de novo synthesis of purine nucleotides, regulating purB, purC, purEK, purF, purHD, purL, purMN and guaBA expression. In addition, it participates in the regulation or coregulation of genes involved in de novo pyrimidine nucleotide biosynthesis, salvage and uptake (pyrC, pyrD, carAB and codBA), and of several genes encoding enzymes necessary for nucleotide and polyamine biosynthesis (prsA, glyA, gcvTHP, speA, glnB). Binds to a 16-bp palindromic sequence located within the promoter region of pur regulon genes. The consensus binding sequence is 5'-ACGCAAACGTTTTCNT-3'. PurR is allosterically activated to bind its cognate DNA by binding the purine corepressors, hypoxanthine or guanine, thereby effecting transcription repression. The polypeptide is HTH-type transcriptional repressor PurR (purR) (Escherichia coli (strain K12)).